The following is a 110-amino-acid chain: WPPLHPLYRTDLSLEAAIEEEANRLDPLVQQANLLIDTAALSTHELAERLREFLSGHSDKELKIVVESFGFKYGIPLDADYVFDVRFLPNPHWNQGLRPLTGLDDEVANS.

This sequence belongs to the RapZ-like family.

Functionally, displays ATPase and GTPase activities. This Aggregatibacter actinomycetemcomitans (Actinobacillus actinomycetemcomitans) protein is Nucleotide-binding protein HI1146 homolog.